The primary structure comprises 207 residues: LexA repressor (207 aa).

Residues 29–49 (VREICSAVDLSSTSTVHGHLA) constitute a DNA-binding region (H-T-H motif). Catalysis depends on for autocatalytic cleavage activity residues S128 and K166.

The protein belongs to the peptidase S24 family. In terms of assembly, homodimer.

It carries out the reaction Hydrolysis of Ala-|-Gly bond in repressor LexA.. Its function is as follows. Represses a number of genes involved in the response to DNA damage (SOS response), including recA and lexA. In the presence of single-stranded DNA, RecA interacts with LexA causing an autocatalytic cleavage which disrupts the DNA-binding part of LexA, leading to derepression of the SOS regulon and eventually DNA repair. The protein is LexA repressor of Lactobacillus gasseri (strain ATCC 33323 / DSM 20243 / BCRC 14619 / CIP 102991 / JCM 1131 / KCTC 3163 / NCIMB 11718 / NCTC 13722 / AM63).